An 89-amino-acid polypeptide reads, in one-letter code: Defensin-like protein 103 (89 aa).

The signal sequence occupies residues 1 to 24 (MAITRKNLVAFCFTILFIISSIHC). Cystine bridges form between C46-C84, C52-C75, C61-C82, and C65-C83.

The protein belongs to the DEFL family.

The protein resides in the secreted. This Arabidopsis thaliana (Mouse-ear cress) protein is Defensin-like protein 103.